We begin with the raw amino-acid sequence, 90 residues long: Probable Fe(2+)-trafficking protein (90 aa).

This sequence belongs to the Fe(2+)-trafficking protein family.

Could be a mediator in iron transactions between iron acquisition and iron-requiring processes, such as synthesis and/or repair of Fe-S clusters in biosynthetic enzymes. This Pasteurella multocida (strain Pm70) protein is Probable Fe(2+)-trafficking protein.